A 339-amino-acid chain; its full sequence is Dihydroorotate dehydrogenase (quinone) (339 aa).

Residues 64–68 and Thr88 each bind FMN; that span reads AGADK. Substrate is bound at residue Lys68. 113–117 provides a ligand contact to substrate; the sequence is NRNGF. Positions 141 and 174 each coordinate FMN. Residue Asn174 participates in substrate binding. The Nucleophile role is filled by Ser177. Asn179 contributes to the substrate binding site. Positions 219 and 247 each coordinate FMN. Substrate is bound at residue 248–249; the sequence is NT. Residues Gly270, Gly299, and 320-321 each bind FMN; that span reads YS.

Belongs to the dihydroorotate dehydrogenase family. Type 2 subfamily. In terms of assembly, monomer. FMN serves as cofactor.

Its subcellular location is the cell membrane. The catalysed reaction is (S)-dihydroorotate + a quinone = orotate + a quinol. The protein operates within pyrimidine metabolism; UMP biosynthesis via de novo pathway; orotate from (S)-dihydroorotate (quinone route): step 1/1. Functionally, catalyzes the conversion of dihydroorotate to orotate with quinone as electron acceptor. The polypeptide is Dihydroorotate dehydrogenase (quinone) (pyrD) (Pasteurella multocida (strain Pm70)).